The chain runs to 573 residues: 60 kDa heat shock protein, mitochondrial (573 aa).

A mitochondrion-targeting transit peptide spans 1–26; sequence MLRLPTVLRQMRPVSRALAPHLTRAY. At lysine 31 the chain carries N6-succinyllysine. 2 positions are modified to phosphoserine: serine 67 and serine 70. Lysine 75 is a binding site for ATP. Lysine 75 carries the post-translational modification N6-acetyllysine. At lysine 82 the chain carries N6-acetyllysine; alternate. The residue at position 82 (lysine 82) is an N6-succinyllysine; alternate. Lysine 87 bears the N6-acetyllysine mark. Phosphotyrosine is present on tyrosine 90. Residue lysine 91 is modified to N6-acetyllysine. ATP is bound at residue 111–115; it reads DGTTT. At lysine 125 the chain carries N6-acetyllysine; alternate. At lysine 125 the chain carries N6-succinyllysine; alternate. Lysine 130 carries the post-translational modification N6-acetyllysine. Lysine 133 is modified (N6-acetyllysine; alternate). N6-succinyllysine; alternate is present on lysine 133. Position 133 is an N6-malonyllysine; alternate (lysine 133). Lysine 156 is subject to N6-acetyllysine. An N6-acetyllysine; alternate mark is found at lysine 191, lysine 202, lysine 205, lysine 218, and lysine 236. An N6-succinyllysine; alternate mark is found at lysine 191, lysine 202, lysine 205, lysine 218, and lysine 236. The residue at position 249 (lysine 249) is an N6-acetyllysine. Lysine 250 carries the N6-acetyllysine; alternate modification. Lysine 250 bears the N6-succinyllysine; alternate mark. N6-acetyllysine is present on residues lysine 269 and lysine 292. An N6-succinyllysine modification is found at lysine 301. Residue lysine 314 is modified to N6-acetyllysine. Lysine 352 is modified (N6-acetyllysine; alternate). Lysine 352 is modified (N6-succinyllysine; alternate). N6-acetyllysine is present on residues lysine 359 and lysine 389. Lysine 396 is modified (N6-acetyllysine; alternate). Lysine 396 carries the N6-succinyllysine; alternate modification. The residue at position 410 (serine 410) is a Phosphoserine. Glycine 440 lines the ATP pocket. Lysine 455 is modified (N6-acetyllysine; alternate). Lysine 455 is modified (N6-succinyllysine; alternate). N6-acetyllysine is present on lysine 469. Residue lysine 481 is modified to N6-acetyllysine; alternate. N6-succinyllysine; alternate is present on lysine 481. Residue serine 488 is modified to Phosphoserine. Aspartate 520 lines the ATP pocket. Lysine 551 participates in a covalent cross-link: Glycyl lysine isopeptide (Lys-Gly) (interchain with G-Cter in SUMO2).

It belongs to the chaperonin (HSP60) family. Homoheptamer arranged in a ring structure. The functional units of these chaperonins consist of heptameric rings of the large subunit Hsp60, which function as a back-to-back double ring. Interacts with 2 heptameric Hsp10 rings to form the symmetrical football complex. Interacts with HRAS. Interacts with ATAD3A. Interacts with ETFBKMT and EEF1AKMT3. Interacts with MFHAS1.

It localises to the mitochondrion matrix. The enzyme catalyses ATP + H2O + a folded polypeptide = ADP + phosphate + an unfolded polypeptide.. In terms of biological role, chaperonin implicated in mitochondrial protein import and macromolecular assembly. Together with Hsp10, facilitates the correct folding of imported proteins. May also prevent misfolding and promote the refolding and proper assembly of unfolded polypeptides generated under stress conditions in the mitochondrial matrix. The functional units of these chaperonins consist of heptameric rings of the large subunit Hsp60, which function as a back-to-back double ring. In a cyclic reaction, Hsp60 ring complexes bind one unfolded substrate protein per ring, followed by the binding of ATP and association with 2 heptameric rings of the co-chaperonin Hsp10. This leads to sequestration of the substrate protein in the inner cavity of Hsp60 where, for a certain period of time, it can fold undisturbed by other cell components. Synchronous hydrolysis of ATP in all Hsp60 subunits results in the dissociation of the chaperonin rings and the release of ADP and the folded substrate protein. This chain is 60 kDa heat shock protein, mitochondrial (HSPD1), found in Cricetulus griseus (Chinese hamster).